A 413-amino-acid chain; its full sequence is MKHQETTSQQYNFSIIKHGDISTPQGFTAGGMHIGLRANKKDFGWIYSSSLASSAAVYTLNQFKAAPLIVTEDTLQKSKGKLQALVVNSANANSCTGQQGIDDARQTQTWVAQQLQIPSEHVAVASTGVIGEYLPMDKIKTGTEHIKDTNFATPGAFNEAILTTDTCTKHIAVSLKIDGKTVTIGGSAKGSGMIHPNMATMLAFITTDASIESNTLHQLLKSSTDHTFNMITVDGDTSTNDMVLVMANHQVEHQILSQDHPQWETFVDAFNFVCTFLAKAIARDGEGATKLISVNVSGAKSISDARKIGKTIVSSNLVKSAIFGEDANFGRIITAIGYSGCEIDPKCTYVQLNQIPVVDKGMAVLFDEQAMSNTLTHEHVTIDVQLGLGNAAATAYGCDLSYDYVRINASYRT.

Substrate contacts are provided by Thr-163, Lys-189, Thr-200, Glu-286, Asn-408, and Thr-413. The active-site Nucleophile is Thr-200.

This sequence belongs to the ArgJ family. Heterotetramer of two alpha and two beta chains.

Its subcellular location is the cytoplasm. The enzyme catalyses N(2)-acetyl-L-ornithine + L-glutamate = N-acetyl-L-glutamate + L-ornithine. It carries out the reaction L-glutamate + acetyl-CoA = N-acetyl-L-glutamate + CoA + H(+). The protein operates within amino-acid biosynthesis; L-arginine biosynthesis; L-ornithine and N-acetyl-L-glutamate from L-glutamate and N(2)-acetyl-L-ornithine (cyclic): step 1/1. It participates in amino-acid biosynthesis; L-arginine biosynthesis; N(2)-acetyl-L-ornithine from L-glutamate: step 1/4. Catalyzes two activities which are involved in the cyclic version of arginine biosynthesis: the synthesis of N-acetylglutamate from glutamate and acetyl-CoA as the acetyl donor, and of ornithine by transacetylation between N(2)-acetylornithine and glutamate. The protein is Arginine biosynthesis bifunctional protein ArgJ of Staphylococcus aureus (strain Mu50 / ATCC 700699).